Consider the following 793-residue polypeptide: Nuclear cap-binding protein subunit 1 (793 aa).

The MIF4G domain occupies 28–242 (EKKLQEVIGK…SLSAQIENLR (215 aa)).

It belongs to the NCBP1 family. In terms of assembly, component of the nuclear cap-binding complex (CBC), a heterodimer composed of ncbp-1 and ncbp-1 that interacts with m7GpppG-capped RNA.

Its subcellular location is the nucleus. Component of the cap-binding complex (CBC), which binds cotranscriptionally to the 5'-cap of pre-mRNAs and is involved in various processes such as pre-mRNA splicing and RNA-mediated gene silencing (RNAi). The CBC complex is involved in miRNA-mediated RNA interference and is required for primary microRNAs (miRNAs) processing. In the CBC complex, ncbp-1 does not bind directly capped RNAs (m7GpppG-capped RNA) but is required to stabilize the movement of the N-terminal loop of ncbp-2 and lock the CBC into a high affinity cap-binding state with the cap structure. The sequence is that of Nuclear cap-binding protein subunit 1 (ncbp-1) from Caenorhabditis briggsae.